The chain runs to 295 residues: Transcription factor MYB34 (295 aa).

HTH myb-type domains lie at 9–61 (EEGI…ANYL) and 62–116 (RPDI…KKRL). DNA-binding regions (H-T-H motif) lie at residues 37–61 (WRTL…ANYL) and 89–112 (WAAI…NTNL).

Can form complexes with MYC2, MYC3 or MYC4. Expressed in trichomes.

The protein localises to the nucleus. In terms of biological role, transcription factor involved in tryptophan gene activation and in indole-3-acetic acid (IAA) and indolic glucosinolates (IG) biosynthesis. Acts as a direct transcriptional activator of both Trp synthesis genes and Trp secondary metabolism genes. The sequence is that of Transcription factor MYB34 (MYB34) from Arabidopsis thaliana (Mouse-ear cress).